We begin with the raw amino-acid sequence, 485 residues long: Trk system potassium uptake protein TrkH (485 aa).

The Cytoplasmic segment spans residues 1-2; that stretch reads MQ. Residues 3 to 29 form a helical membrane-spanning segment; that stretch reads FRSIIRIVGLLLALFSVTMLAPALVAL. Over 30–35 the chain is Periplasmic; sequence LYRDGA. A helical membrane pass occupies residues 36-57; that stretch reads GVPFVTTFFVLLFCGAMCWFPN. Residues 58–65 lie on the Cytoplasmic side of the membrane; it reads RRHKHELK. Residues 66–90 traverse the membrane as a helical segment; the sequence is SRDGFLIVVLFWTVLGSAGSLPFLI. Residues 98 to 109 constitute an intramembrane region (helical; Pore-forming); it reads VTDAFFESFSAL. Residues 110 to 115 lie within the membrane without spanning it; that stretch reads TTTGAT. The segment at 110-115 is selectivity filter part 1; sequence TTTGAT. Residues Thr111 and Thr112 each coordinate K(+). Over 116–124 the chain is Periplasmic; it reads VIVGLDELP. The chain crosses the membrane as a helical span at residues 125–150; that stretch reads KAILFYRQFLQWFGGMGIIVLAVAIL. Over 151-177 the chain is Cytoplasmic; the sequence is PVLGIGGMQLYRAEIPGPVKDTKMTPR. A helical transmembrane segment spans residues 178–202; it reads IAETAKALWYIYLSLTIACAVAFWL. At 203–205 the chain is on the periplasmic side; the sequence is AGM. An intramembrane region is located at residue Thr206. The segment at residues 207–218 is an intramembrane region (helical; Pore-forming); it reads PFDAISHSFSTI. Residues 219-224 lie within the membrane without spanning it; it reads AIGGFS. Residues 219–224 are selectivity filter part 2; that stretch reads AIGGFS. 2 residues coordinate K(+): Ile220 and Gly221. The Periplasmic segment spans residues 225–234; it reads THDASMGYFD. Residues 235 to 250 constitute an intramembrane region (helical); it reads SYAINLITVVFLLISA. Residues 276–296 form a helical membrane-spanning segment; it reads FRAFIFIQVLLFLVCFLLLLK. The segment at residues 303 to 318 is an intramembrane region (helical; Pore-forming); that stretch reads PYDAFDQALFQTVSIS. Residues 319–324 lie within the membrane without spanning it; the sequence is TTAGFT. A selectivity filter part 3 region spans residues 319 to 324; sequence TTAGFT. Residues Thr320 and Ala321 each coordinate K(+). Over 325-332 the chain is Periplasmic; that stretch reads TTGFADWP. An intramembrane region (helical) is located at residues 333 to 344; sequence LFLPVLLLFSSF. Positions 345-357 form an intramembrane region, note=Loop between two helices; the sequence is IGGCAGSTGGGMK. The helical transmembrane segment at 392–419 threads the bilayer; it reads PQRVVDAVWGFFSAYALVFVVCMLGLIA. The Periplasmic segment spans residues 420–421; sequence TG. The stretch at 422 to 423 is an intramembrane region; it reads MD. The segment at residues 424-434 is an intramembrane region (helical; Pore-forming); sequence ELSAFSAVAAT. The stretch at 435–441 is an intramembrane region; that stretch reads LNNLGPG. The interval 436–441 is selectivity filter part 4; sequence NNLGPG. 2 residues coordinate K(+): Asn437 and Leu438. At 442–453 the chain is on the periplasmic side; it reads LGEVALHFGDVN. The segment at residues 454 to 465 is an intramembrane region (helical); the sequence is DKAKWVLIVSML.

This sequence belongs to the TrkH potassium transport family. In terms of assembly, homodimer.

The protein resides in the cell inner membrane. In terms of biological role, low-affinity potassium transport system. Interacts with trk system potassium uptake protein TrkA and requires TrkE for transport activity. Selective for permeation of potassium ion and rubidium ion over smaller ions such as natrium or litium. The protein is Trk system potassium uptake protein TrkH of Vibrio parahaemolyticus serotype O3:K6 (strain RIMD 2210633).